A 357-amino-acid polypeptide reads, in one-letter code: Histidine biosynthesis bifunctional protein HisB (357 aa).

The segment at 1–168 (MSEKVLFIDR…IVFKLTKKHD (168 aa)) is histidinol-phosphatase. Residue Asp9 is the Nucleophile of the active site. Mg(2+) contacts are provided by Asp9 and Asp11. The active-site Proton donor is Asp11. Residues Cys93, His95, Cys101, and Cys103 each contribute to the Zn(2+) site. Asp130 contributes to the Mg(2+) binding site. The interval 169–357 (RHAKVVRNTK…KNLPSSKGLL (189 aa)) is imidazoleglycerol-phosphate dehydratase.

It in the N-terminal section; belongs to the histidinol-phosphatase family. The protein in the C-terminal section; belongs to the imidazoleglycerol-phosphate dehydratase family. It depends on Mg(2+) as a cofactor. Zn(2+) is required as a cofactor.

The protein resides in the cytoplasm. It carries out the reaction D-erythro-1-(imidazol-4-yl)glycerol 3-phosphate = 3-(imidazol-4-yl)-2-oxopropyl phosphate + H2O. It catalyses the reaction L-histidinol phosphate + H2O = L-histidinol + phosphate. It functions in the pathway amino-acid biosynthesis; L-histidine biosynthesis; L-histidine from 5-phospho-alpha-D-ribose 1-diphosphate: step 6/9. Its pathway is amino-acid biosynthesis; L-histidine biosynthesis; L-histidine from 5-phospho-alpha-D-ribose 1-diphosphate: step 8/9. This Buchnera aphidicola subsp. Baizongia pistaciae (strain Bp) protein is Histidine biosynthesis bifunctional protein HisB.